A 416-amino-acid polypeptide reads, in one-letter code: MPKSPFLLEAQARGLIFQCTDLDALDEAMLAGPITAYVGFDPTADSLHVGNALTIMALRLLQKHGHRPIALMGGGTAKIGDPSFRDEARSLITNETIAHNIAGIEKSLRQFITFSDEDPSSGAILANNADWLDKLSYINLLQDVGVHFSVSRMLGFDSVRQRLEREQGLTFLEFNYSILQSYDFRELNRRHGAVLQMGGSDQWGNIVSGIDLTRRTDGKQIFGLTTPLVTTSSGAKMGKSAKGATWVRPEKLPVFEYWQFWRNTEDADVGRFLKFFTDLPVEECERLGALEGSEINEAKKILATEATAICHGRGAAEEAAETARRVFEQGSAQAALPEIDLPANLIAEGLPAFRVFQEAGLAASGGEARRLIRGGGGRVNDVVVSDENQTFTLDDLRDGVLKVSYGKKKHILLRPV.

Tyr37 lines the L-tyrosine pocket. A 'HIGH' region motif is present at residues Pro42–Asn51. L-tyrosine contacts are provided by Tyr176 and Gln180. A 'KMSKS' region motif is present at residues Lys236 to Ser240. Lys239 provides a ligand contact to ATP. Positions Leu350–Val416 constitute an S4 RNA-binding domain.

This sequence belongs to the class-I aminoacyl-tRNA synthetase family. TyrS type 1 subfamily. As to quaternary structure, homodimer.

The protein resides in the cytoplasm. The enzyme catalyses tRNA(Tyr) + L-tyrosine + ATP = L-tyrosyl-tRNA(Tyr) + AMP + diphosphate + H(+). In terms of biological role, catalyzes the attachment of tyrosine to tRNA(Tyr) in a two-step reaction: tyrosine is first activated by ATP to form Tyr-AMP and then transferred to the acceptor end of tRNA(Tyr). This is Tyrosine--tRNA ligase from Gluconobacter oxydans (strain 621H) (Gluconobacter suboxydans).